The chain runs to 377 residues: 3-dehydroquinate synthase (377 aa).

NAD(+) is bound by residues 113–117 (GVIGD), 137–138 (TT), Lys150, and Lys159. Zn(2+)-binding residues include Glu192, His254, and His273.

The protein belongs to the sugar phosphate cyclases superfamily. Dehydroquinate synthase family. It depends on Co(2+) as a cofactor. The cofactor is Zn(2+). NAD(+) serves as cofactor.

It localises to the cytoplasm. The catalysed reaction is 7-phospho-2-dehydro-3-deoxy-D-arabino-heptonate = 3-dehydroquinate + phosphate. The protein operates within metabolic intermediate biosynthesis; chorismate biosynthesis; chorismate from D-erythrose 4-phosphate and phosphoenolpyruvate: step 2/7. Functionally, catalyzes the conversion of 3-deoxy-D-arabino-heptulosonate 7-phosphate (DAHP) to dehydroquinate (DHQ). The sequence is that of 3-dehydroquinate synthase from Bartonella tribocorum (strain CIP 105476 / IBS 506).